The chain runs to 78 residues: D-alanyl carrier protein (78 aa).

The Carrier domain occupies 1-78; it reads MAFRENVLEI…MIITQLEALK (78 aa). The residue at position 36 (Ser-36) is an O-(pantetheine 4'-phosphoryl)serine.

This sequence belongs to the DltC family. Post-translationally, 4'-phosphopantetheine is transferred from CoA to a specific serine of apo-DCP.

The protein localises to the cytoplasm. It participates in cell wall biogenesis; lipoteichoic acid biosynthesis. Carrier protein involved in the D-alanylation of lipoteichoic acid (LTA). The loading of thioester-linked D-alanine onto DltC is catalyzed by D-alanine--D-alanyl carrier protein ligase DltA. The DltC-carried D-alanyl group is further transferred to cell membrane phosphatidylglycerol (PG) by forming an ester bond, probably catalyzed by DltD. D-alanylation of LTA plays an important role in modulating the properties of the cell wall in Gram-positive bacteria, influencing the net charge of the cell wall. The polypeptide is D-alanyl carrier protein (Listeria welshimeri serovar 6b (strain ATCC 35897 / DSM 20650 / CCUG 15529 / CIP 8149 / NCTC 11857 / SLCC 5334 / V8)).